The following is a 358-amino-acid chain: MDKLVDHFLSDQSRTMNEDLFSATSTELCYENLNRSCVRSPYSPGPRLILYAVFGFGAALAVCGNLLVMTSILHFRQLHSPANFLVASLACADFLVGLTVMPFSTVRSVEGCWYFGESYCKFHSCFEGSFCYSSIFHLCFISVDRYIAVSDPLTYPTRFTASVSGKCITFSWLLSIIYSFSLLYTGANEAGLEDLVSVLTCVGGCQIAVNQSWVFINFLLFLIPTLVMMTVYSKIFLIAKQQAQNIEKMSKQTARASESYKDRVAKRERKAAKTLGIAVAAFLLSWLPYFIDSIIDAFLGFITPTYVYEILVWIAYYNSAMNPLIYAFFYPWFRKAIKLIVTGKILRENSSTTNLFPE.

At M1 to R47 the chain is on the extracellular side. Residue N34 is glycosylated (N-linked (GlcNAc...) asparagine). Cystine bridges form between C37–C201 and C120–C205. The chain crosses the membrane as a helical span at residues L48 to V68. The Cytoplasmic portion of the chain corresponds to M69 to N83. A helical transmembrane segment spans residues F84–S104. Over T105–K121 the chain is Extracellular. The helical transmembrane segment at F122–V143 threads the bilayer. The Cytoplasmic portion of the chain corresponds to D144 to K166. Residues C167–A187 traverse the membrane as a helical segment. Over N188–S212 the chain is Extracellular. Residue N210 is glycosylated (N-linked (GlcNAc...) asparagine). A helical transmembrane segment spans residues W213 to S233. The Cytoplasmic segment spans residues K234–T274. The chain crosses the membrane as a helical span at residues L275–I295. At D296–E309 the chain is on the extracellular side. The helical transmembrane segment at I310–F333 threads the bilayer. Residues R334–E358 are Cytoplasmic-facing.

It belongs to the G-protein coupled receptor 1 family. As to expression, specifically expressed in neurons of the olfactory epithelium.

It is found in the cell membrane. In terms of biological role, olfactory receptor specific for N,N-dimethylalkylamines trace amines. Trace amine compounds are enriched in animal body fluids and act on trace amine-associated receptors (TAARs) to elicit both intraspecific and interspecific innate behaviors. Ligand-binding causes a conformation change that triggers signaling via G(s)-class of G alpha proteins (GNAL or GNAS). The protein is Trace amine-associated receptor 7a of Mus musculus (Mouse).